A 113-amino-acid chain; its full sequence is Large ribosomal subunit protein bL19 (113 aa).

Belongs to the bacterial ribosomal protein bL19 family.

In terms of biological role, this protein is located at the 30S-50S ribosomal subunit interface and may play a role in the structure and function of the aminoacyl-tRNA binding site. The protein is Large ribosomal subunit protein bL19 of Natranaerobius thermophilus (strain ATCC BAA-1301 / DSM 18059 / JW/NM-WN-LF).